Here is a 612-residue protein sequence, read N- to C-terminus: Probable Xaa-Pro aminopeptidase P (612 aa).

Residues D409, D420, E518, and E532 each contribute to the Mn(2+) site.

This sequence belongs to the peptidase M24B family. Mn(2+) serves as cofactor.

It carries out the reaction Release of any N-terminal amino acid, including proline, that is linked to proline, even from a dipeptide or tripeptide.. Its function is as follows. Catalyzes the removal of a penultimate prolyl residue from the N-termini of peptides. The chain is Probable Xaa-Pro aminopeptidase P (AMPP) from Verticillium alfalfae (strain VaMs.102 / ATCC MYA-4576 / FGSC 10136) (Verticillium wilt of alfalfa).